The chain runs to 1305 residues: Contactin-associated protein like 5-4 (1305 aa).

The first 24 residues, 1 to 24 (MNSVRRLNSILTLVLSGLWHLGLT), serve as a signal peptide directing secretion. The Extracellular segment spans residues 25–1237 (ATNYNCDEPL…LTDTVQSDSA (1213 aa)). One can recognise an F5/8 type C domain in the interval 30-174 (CDEPLASFLS…IGMRVEVYGC (145 aa)). An intrachain disulfide couples cysteine 30 to cysteine 174. 2 Laminin G-like domains span residues 180-360 (IVGF…TFSC) and 367-544 (PITF…IDLC). Residue asparagine 282 is glycosylated (N-linked (GlcNAc...) asparagine). Cysteines 329 and 360 form a disulfide. The N-linked (GlcNAc...) asparagine glycan is linked to asparagine 496. Intrachain disulfides connect cysteine 512-cysteine 544, cysteine 550-cysteine 561, and cysteine 555-cysteine 570. An EGF-like 1 domain is found at 546–583 (IKDRCLPNYCEHGGHCAQNWTTFYCNCSDTGYTGATCH). The N-linked (GlcNAc...) asparagine glycan is linked to asparagine 571. The cysteines at positions 572 and 582 are disulfide-linked. Residues 584–790 (DSVYEQSCEV…LRCYGDRHFW (207 aa)) form the Fibrinogen C-terminal domain. N-linked (GlcNAc...) asparagine glycosylation is present at asparagine 622. The Laminin G-like 3 domain occupies 791–956 (NAVSFTTEAS…KLMSGVTPGC (166 aa)). 4 cysteine pairs are disulfide-bonded: cysteine 929/cysteine 956, cysteine 960/cysteine 973, cysteine 967/cysteine 982, and cysteine 984/cysteine 994. Positions 957–995 (LGHCSSYGSNCLNGGKCVEKQSGYSCDCTNSPNEGPFCQ) constitute an EGF-like 2 domain. A Laminin G-like 4 domain is found at 1014–1198 (EPYLVIKNTS…VQGTLTESGC (185 aa)). N-linked (GlcNAc...) asparagine glycosylation is present at asparagine 1057. Cysteine 1163 and cysteine 1198 are joined by a disulfide. The chain crosses the membrane as a helical span at residues 1238–1258 (VIGGIIALVTFVTFCVIGIMI). Residues 1259–1305 (HFLYLHKQSHCTNQTKEKEYSENLSNSFRNAIDLQNTASECKREYFI) are Cytoplasmic-facing.

Belongs to the neurexin family.

Its subcellular location is the membrane. Its function is as follows. May play a role in the correct development and proper functioning of the peripheral and central nervous system and be involved in cell adhesion and intercellular communication. The protein is Contactin-associated protein like 5-4 (Cntnap5d) of Rattus norvegicus (Rat).